We begin with the raw amino-acid sequence, 227 residues long: Cytidylate kinase (227 aa).

Residue 12-20 (GPSGSGKGT) participates in ATP binding.

The protein belongs to the cytidylate kinase family. Type 1 subfamily.

The protein localises to the cytoplasm. The enzyme catalyses CMP + ATP = CDP + ADP. It catalyses the reaction dCMP + ATP = dCDP + ADP. This Nitrosococcus oceani (strain ATCC 19707 / BCRC 17464 / JCM 30415 / NCIMB 11848 / C-107) protein is Cytidylate kinase.